We begin with the raw amino-acid sequence, 436 residues long: Ribulose bisphosphate carboxylase large chain (436 aa).

N104 and T154 together coordinate substrate. K156 acts as the Proton acceptor in catalysis. Residue K158 participates in substrate binding. Positions 182, 184, and 185 each coordinate Mg(2+). K182 is subject to N6-carboxylysine. H275 acts as the Proton acceptor in catalysis. Substrate-binding residues include R276, H308, and S360.

This sequence belongs to the RuBisCO large chain family. Type I subfamily. As to quaternary structure, heterohexadecamer of 8 large chains and 8 small chains. It depends on Mg(2+) as a cofactor.

The protein resides in the plastid. It is found in the chloroplast. The enzyme catalyses 2 (2R)-3-phosphoglycerate + 2 H(+) = D-ribulose 1,5-bisphosphate + CO2 + H2O. It catalyses the reaction D-ribulose 1,5-bisphosphate + O2 = 2-phosphoglycolate + (2R)-3-phosphoglycerate + 2 H(+). RuBisCO catalyzes two reactions: the carboxylation of D-ribulose 1,5-bisphosphate, the primary event in carbon dioxide fixation, as well as the oxidative fragmentation of the pentose substrate in the photorespiration process. Both reactions occur simultaneously and in competition at the same active site. In Euglena myxocylindracea, this protein is Ribulose bisphosphate carboxylase large chain.